The primary structure comprises 438 residues: UDP-N-acetyl-D-mannosamine dehydrogenase (438 aa).

Tyr21, Ile22, Asp41, Arg46, Thr93, and Thr131 together coordinate NAD(+). UDP-N-acetyl-alpha-D-mannosaminouronate is bound by residues Arg160, Val161, Lys212, Asn216, Arg219, His250, Arg252, and Gly263. Lys212 acts as the Proton donor/acceptor in catalysis. Residue Cys266 is the Nucleophile of the active site. Residues Tyr323 and Lys324 each contribute to the UDP-N-acetyl-alpha-D-mannosaminouronate site. Arg331 is an NAD(+) binding site. Lys409 contacts UDP-N-acetyl-alpha-D-mannosaminouronate.

The protein belongs to the UDP-glucose/GDP-mannose dehydrogenase family. As to quaternary structure, homotetramer; probably dimer of dimers.

It carries out the reaction UDP-N-acetyl-alpha-D-mannosamine + 2 NAD(+) + H2O = UDP-N-acetyl-alpha-D-mannosaminouronate + 2 NADH + 3 H(+). Its function is as follows. Catalyzes the four-electron oxidation of UDP-N-acetyl-D-mannosamine (UDP-ManNAc), reducing NAD(+) and releasing UDP-N-acetylmannosaminuronic acid (UDP-ManNAcA). This Methanococcus aeolicus (strain ATCC BAA-1280 / DSM 17508 / OCM 812 / Nankai-3) protein is UDP-N-acetyl-D-mannosamine dehydrogenase (wecC).